A 247-amino-acid chain; its full sequence is MSEAAKTLDGWYCLHDLRSIDWVSWKTLSSEEREQAIVEFLNIIEKWNKVAAEKQGSHAMYTIVGQKADIMFMLLRPTMEELNEIETELNKTTLAEYMIPAYSYVSVVELSNYLPADEDPYQNPQILARLYPELPTANHICFYPMDKRRQGNDNWYMLPMEERKKLMYSHGKIGRQYAGKVRQVITGSVGFDDYEWGVTLFADDVLQFKKLVYEMRFDEVSARYGEFGTFFVGNILPSEKVTSFLHV.

Residues Arg-129, 143–147 (YPMDK), His-170, Gln-183, and Ser-221 contribute to the Fe-coproporphyrin III site. Residue Tyr-143 is part of the active site.

This sequence belongs to the ChdC family. Type 1 subfamily. It depends on Fe-coproporphyrin III as a cofactor.

It carries out the reaction Fe-coproporphyrin III + 2 H2O2 + 2 H(+) = heme b + 2 CO2 + 4 H2O. The catalysed reaction is Fe-coproporphyrin III + H2O2 + H(+) = harderoheme III + CO2 + 2 H2O. It catalyses the reaction harderoheme III + H2O2 + H(+) = heme b + CO2 + 2 H2O. Its pathway is porphyrin-containing compound metabolism; protoheme biosynthesis. Its function is as follows. Involved in coproporphyrin-dependent heme b biosynthesis. Catalyzes the decarboxylation of Fe-coproporphyrin III (coproheme) to heme b (protoheme IX), the last step of the pathway. The reaction occurs in a stepwise manner with a three-propionate intermediate. This chain is Coproheme decarboxylase, found in Bacillus cytotoxicus (strain DSM 22905 / CIP 110041 / 391-98 / NVH 391-98).